Here is a 433-residue protein sequence, read N- to C-terminus: Pyrimidine-nucleoside phosphorylase (433 aa).

Residue 81 to 83 (KHS) participates in phosphate binding. The K(+) site is built by glycine 88 and threonine 90. Phosphate-binding positions include threonine 92, 108 to 110 (KMS), and threonine 120. The substrate site is built by arginine 168 and lysine 187. K(+) contacts are provided by leucine 243, alanine 246, and glutamate 255.

Belongs to the thymidine/pyrimidine-nucleoside phosphorylase family. In terms of assembly, homodimer. The cofactor is K(+).

The enzyme catalyses uridine + phosphate = alpha-D-ribose 1-phosphate + uracil. The catalysed reaction is thymidine + phosphate = 2-deoxy-alpha-D-ribose 1-phosphate + thymine. It carries out the reaction 2'-deoxyuridine + phosphate = 2-deoxy-alpha-D-ribose 1-phosphate + uracil. Functionally, catalyzes phosphorolysis of the pyrimidine nucleosides uridine, thymidine and 2'-deoxyuridine with the formation of the corresponding pyrimidine base and ribose-1-phosphate. This chain is Pyrimidine-nucleoside phosphorylase (pdp), found in Staphylococcus aureus (strain MSSA476).